We begin with the raw amino-acid sequence, 345 residues long: L-threonine 3-dehydrogenase (345 aa).

Residue Cys-39 participates in Zn(2+) binding. Active-site charge relay system residues include Thr-41 and His-44. His-64, Glu-65, Cys-94, Cys-97, Cys-100, and Cys-108 together coordinate Zn(2+). NAD(+)-binding positions include Ile-176, Asp-196, Arg-201, 263 to 265 (LGI), and 287 to 288 (VY).

The protein belongs to the zinc-containing alcohol dehydrogenase family. As to quaternary structure, homotetramer. Zn(2+) is required as a cofactor.

The protein localises to the cytoplasm. The catalysed reaction is L-threonine + NAD(+) = (2S)-2-amino-3-oxobutanoate + NADH + H(+). It participates in amino-acid degradation; L-threonine degradation via oxydo-reductase pathway; glycine from L-threonine: step 1/2. Functionally, catalyzes the NAD(+)-dependent oxidation of L-threonine to 2-amino-3-ketobutyrate. The chain is L-threonine 3-dehydrogenase from Anaeromyxobacter dehalogenans (strain 2CP-C).